The following is a 263-amino-acid chain: Complement control protein C3 (263 aa).

Residues methionine 1–serine 19 form the signal peptide. Sushi domains follow at residues cysteine 20–lysine 83, arginine 84–serine 145, valine 146–isoleucine 203, and valine 204–arginine 263. Disulfide bonds link cysteine 21-cysteine 70, cysteine 54-cysteine 81, cysteine 86-cysteine 126, cysteine 112-cysteine 143, cysteine 148-cysteine 190, cysteine 176-cysteine 201, cysteine 206-cysteine 248, and cysteine 234-cysteine 261.

The protein belongs to the receptors of complement activation (RCA) family. As to quaternary structure, heterodimer with A56 protein; disulfide-linked.

The protein localises to the virion membrane. It localises to the host cell membrane. Its subcellular location is the secreted. Functionally, serves to protect the virus against complement attack by inhibiting both classical and alternative pathways of complement activation. Binds C3b and C4b. The chain is Complement control protein C3 from Vaccinia virus (strain Copenhagen) (VACV).